Consider the following 305-residue polypeptide: tRNA pseudouridine synthase B (305 aa).

The Nucleophile role is filled by D48.

It belongs to the pseudouridine synthase TruB family. Type 1 subfamily.

It carries out the reaction uridine(55) in tRNA = pseudouridine(55) in tRNA. In terms of biological role, responsible for synthesis of pseudouridine from uracil-55 in the psi GC loop of transfer RNAs. The protein is tRNA pseudouridine synthase B of Stutzerimonas stutzeri (strain A1501) (Pseudomonas stutzeri).